The primary structure comprises 382 residues: MNKSGSFYNLETIGGILLFIAAVIAIIIANSPFRVGYEYFLSINGSVSVGNLSITKPLLLWINDGLMAIYFLLIGLEIKREVNRGILSDKTNLLVPALTALAGLIFPALIFIFFNAHHPVYLKGWAIPTATDIAFTLGIVSLLGSRVPFSLKILLTAIAIFDDIAAIVIIALFYTEQLSLLSLSLALVFTLILIGLNYFKCRRISVFMLFGVALWIAVLKSGVHATLAGIVIAMTIPDEGKESMLARLEDGLHHWVVFLILPLFAFANAGVSFVGLDASMFTHPVVLGIGLGLFLGKQLGIFLSLGYFVQFKKFLKADKVNLAQVYGIALICGVGFTMSLFIGSLAYQNYDLSLMPMVKIGVVLGSFIAGLTGFLVLKLKQQ.

11 helical membrane passes run 13–33 (IGGI…NSPF), 58–78 (LLLW…GLEI), 94–114 (LVPA…FIFF), 124–144 (GWAI…SLLG), 153–173 (ILLT…IALF), 179–199 (SLLS…LNYF), 204–224 (ISVF…SGVH), 256–276 (VVFL…FVGL), 285–305 (VVLG…FLSL), 325–345 (VYGI…IGSL), and 357–377 (MVKI…FLVL).

The protein belongs to the NhaA Na(+)/H(+) (TC 2.A.33) antiporter family.

The protein resides in the cell inner membrane. The catalysed reaction is Na(+)(in) + 2 H(+)(out) = Na(+)(out) + 2 H(+)(in). Na(+)/H(+) antiporter that extrudes sodium in exchange for external protons. The sequence is that of Na(+)/H(+) antiporter NhaA from Legionella pneumophila (strain Paris).